The primary structure comprises 337 residues: Eukaryotic translation initiation factor 3 subunit H (337 aa).

The MPN domain occupies 21–153 (VQCDGLAVMK…LKAYRLTPQA (133 aa)).

The protein belongs to the eIF-3 subunit H family. Component of the eukaryotic translation initiation factor 3 (eIF-3) complex.

The protein resides in the cytoplasm. Functionally, component of the eukaryotic translation initiation factor 3 (eIF-3) complex, which is involved in protein synthesis of a specialized repertoire of mRNAs and, together with other initiation factors, stimulates binding of mRNA and methionyl-tRNAi to the 40S ribosome. The eIF-3 complex specifically targets and initiates translation of a subset of mRNAs involved in cell proliferation. The polypeptide is Eukaryotic translation initiation factor 3 subunit H (Bombyx mori (Silk moth)).